The following is a 246-amino-acid chain: UDP-N-acetyl-D-mannosaminuronic acid transferase (246 aa).

It belongs to the glycosyltransferase 26 family.

It catalyses the reaction UDP-N-acetyl-alpha-D-mannosaminouronate + N-acetyl-alpha-D-glucosaminyl-di-trans,octa-cis-undecaprenyl diphosphate = beta-D-ManNAcA-(1-&gt;4)-alpha-D-GlcNAc-di-trans,octa-cis-undecaprenyl diphosphate + UDP + H(+). The protein operates within bacterial outer membrane biogenesis; enterobacterial common antigen biosynthesis. In terms of biological role, catalyzes the synthesis of Und-PP-GlcNAc-ManNAcA (Lipid II), the second lipid-linked intermediate involved in enterobacterial common antigen (ECA) synthesis. In Shigella flexneri, this protein is UDP-N-acetyl-D-mannosaminuronic acid transferase.